A 140-amino-acid chain; its full sequence is Large ribosomal subunit protein uL15 (140 aa).

Residues 1 to 31 (MDTKKFRGSRTCGGGTHKNRRGAGNRGGRGK) are disordered.

This sequence belongs to the universal ribosomal protein uL15 family. Part of the 50S ribosomal subunit.

Its function is as follows. Binds to the 23S rRNA. This chain is Large ribosomal subunit protein uL15, found in Methanosarcina barkeri (strain Fusaro / DSM 804).